We begin with the raw amino-acid sequence, 701 residues long: F-box/LRR-repeat protein 17 (701 aa).

The segment covering 1 to 11 has biased composition (basic and acidic residues); sequence MGHLLSKEPRN. 3 disordered regions span residues 1–20, 72–94, and 227–300; these read MGHLLSKEPRNRPSQKRPRC, APAGPEEEPPLSPPPRDGAYAAA, and GGGG…DADC. The span at 227 to 237 shows a compositional bias: gly residues; the sequence is GGGGGPAGGGA. The segment covering 252-264 has biased composition (pro residues); sequence EQPPQPLCPPPSS. An F-box domain is found at 318 to 365; that stretch reads TPDINQLPPSILLKIFSNLSLDERCLSASLVCKYWRDLCLDFQFWKQL.

Belongs to the FBXL17 family. In terms of assembly, part of the SCF (SKP1-CUL1-F-box) E3 ubiquitin-protein ligase complex SCF(FBXL17) composed of CUL1, SKP1, RBX1 and FBXL17. Interacts with BTB domain-containing proteins such as KLHL12, BCL6 and BACH1; specifically recognizes and binds a conserved degron of non-consecutive residues present at the interface of BTB dimers of aberrant composition. Interacts with SUFU. Interacts with PRMT1.

The protein localises to the cytoplasm. Its subcellular location is the nucleus. In terms of biological role, substrate-recognition component of the SCF(FBXL17) E3 ubiquitin ligase complex, a key component of a quality control pathway required to ensure functional dimerization of BTB domain-containing proteins (dimerization quality control, DQC). FBXL17 specifically recognizes and binds a conserved degron of non-consecutive residues present at the interface of BTB dimers of aberrant composition: aberrant BTB dimer are then ubiquitinated by the SCF(FBXL17) complex and degraded by the proteasome. The ability of the SCF(FBXL17) complex to eliminate compromised BTB dimers is required for the differentiation and survival of neural crest and neuronal cells. The SCF(FBXL17) complex mediates ubiquitination and degradation of BACH1. The SCF(FBXL17) complex is also involved in the regulation of the hedgehog/smoothened (Hh) signaling pathway by mediating the ubiquitination and degradation of SUFU, allowing the release of GLI1 from SUFU for proper Hh signal transduction. The SCF(FBXL17) complex mediates ubiquitination and degradation of PRMT1. The protein is F-box/LRR-repeat protein 17 of Homo sapiens (Human).